The following is a 197-amino-acid chain: Holliday junction branch migration complex subunit RuvA (197 aa).

Positions 1-63 are domain I; that stretch reads MFEYLNGKLV…EDAHSLYGFV (63 aa). A domain II region spans residues 64–142; that stretch reads NESEKALFLR…ATGAVGISLL (79 aa). A flexible linker region spans residues 142-146; it reads LDAAP. A domain III region spans residues 147–197; it reads ASNLALEEAIEALQALGYKATELKKIEKKLAQEAGLTSEEYIKSALKLMMK.

The protein belongs to the RuvA family. As to quaternary structure, homotetramer. Forms an RuvA(8)-RuvB(12)-Holliday junction (HJ) complex. HJ DNA is sandwiched between 2 RuvA tetramers; dsDNA enters through RuvA and exits via RuvB. An RuvB hexamer assembles on each DNA strand where it exits the tetramer. Each RuvB hexamer is contacted by two RuvA subunits (via domain III) on 2 adjacent RuvB subunits; this complex drives branch migration. In the full resolvosome a probable DNA-RuvA(4)-RuvB(12)-RuvC(2) complex forms which resolves the HJ.

The protein resides in the cytoplasm. The RuvA-RuvB-RuvC complex processes Holliday junction (HJ) DNA during genetic recombination and DNA repair, while the RuvA-RuvB complex plays an important role in the rescue of blocked DNA replication forks via replication fork reversal (RFR). RuvA specifically binds to HJ cruciform DNA, conferring on it an open structure. The RuvB hexamer acts as an ATP-dependent pump, pulling dsDNA into and through the RuvAB complex. HJ branch migration allows RuvC to scan DNA until it finds its consensus sequence, where it cleaves and resolves the cruciform DNA. This Lactococcus lactis subsp. cremoris (strain MG1363) protein is Holliday junction branch migration complex subunit RuvA.